A 330-amino-acid chain; its full sequence is Cytoskeleton protein RodZ (330 aa).

Residues M1 to G111 are Cytoplasmic-facing. The 53-residue stretch at L19–L71 folds into the HTH cro/C1-type domain. A DNA-binding region (H-T-H motif) is located at residues Q30–D49. Residues W112–W132 traverse the membrane as a helical; Signal-anchor for type II membrane protein segment. Topologically, residues W133–Q330 are periplasmic. Residues M146–L166 are compositionally biased toward polar residues. The interval M146–N237 is disordered. 2 stretches are compositionally biased toward low complexity: residues T176–D202 and T216–T233.

It belongs to the RodZ family.

The protein localises to the cell inner membrane. Its function is as follows. Cytoskeletal protein that is involved in cell-shape control through regulation of the length of the long axis. In Klebsiella pneumoniae (strain 342), this protein is Cytoskeleton protein RodZ.